Reading from the N-terminus, the 557-residue chain is MRDYDEVTAFLGEWGPFQRLIFFLLSASIIPNGFNGMSIVFLAGTPEHRCLVPHTVNLSSAWRNHSIPLETKDGRQVPQKCRRYRLATIANFSELGLEPGRDVDLEQLEQESCLDGWEYDKDVFLSTIVTEWDLVCKDDWKAPLTTSLFFVGVLMGSFISGQLSDRFGRKNVLFLTMGMQTGFSFLQVFSVNFEMFTVLFVLVGMGQISNYVAAFVLGTEILSKSIRIIFATLGVCIFYAFGFMVLPLFAYFIRDWRMLLLALTVPGVLCGALWWFIPESPRWLISQGRIKEAEVIIRKAAKINGIVAPSTIFDPSELQDLNSTKPQLHHIYDLIRTRNIRVITIMSIILWLTISVGYFGLSLDTPNLHGDIYVNCFLLAAVEVPAYVLAWLLLQYLPRRYSISAALFLGGSVLLFMQLVPSELFYLSTALVMVGKFGITSAYSMVYVYTAELYPTVVRNMGVGVSSTASRLGSILSPYFVYLGAYDRFLPYILMGSLTILTAILTLFFPESFGVPLPDTIDQMLRVKGIKQWQIQSQTRMQKDGEESPTVLKSTAF.

Residues 1–20 (MRDYDEVTAFLGEWGPFQRL) lie on the Cytoplasmic side of the membrane. Residues 21 to 41 (IFFLLSASIIPNGFNGMSIVF) form a helical membrane-spanning segment. Residues 42–142 (LAGTPEHRCL…DLVCKDDWKA (101 aa)) are Extracellular-facing. 3 N-linked (GlcNAc...) asparagine glycosylation sites follow: N57, N64, and N91. A helical transmembrane segment spans residues 143 to 163 (PLTTSLFFVGVLMGSFISGQL). The Cytoplasmic portion of the chain corresponds to 164–172 (SDRFGRKNV). Residues 173-193 (LFLTMGMQTGFSFLQVFSVNF) form a helical membrane-spanning segment. Over 194-197 (EMFT) the chain is Extracellular. The helical transmembrane segment at 198–218 (VLFVLVGMGQISNYVAAFVLG) threads the bilayer. 218 to 225 (GTEILSKS) contributes to the ATP binding site. Topologically, residues 219 to 232 (TEILSKSIRIIFAT) are cytoplasmic. Residues 233–253 (LGVCIFYAFGFMVLPLFAYFI) form a helical membrane-spanning segment. The Extracellular segment spans residues 254-257 (RDWR). A helical membrane pass occupies residues 258–278 (MLLLALTVPGVLCGALWWFIP). Over 279–341 (ESPRWLISQG…YDLIRTRNIR (63 aa)) the chain is Cytoplasmic. The chain crosses the membrane as a helical span at residues 342–362 (VITIMSIILWLTISVGYFGLS). Topologically, residues 363–373 (LDTPNLHGDIY) are extracellular. A helical membrane pass occupies residues 374 to 394 (VNCFLLAAVEVPAYVLAWLLL). Over 395–406 (QYLPRRYSISAA) the chain is Cytoplasmic. A helical membrane pass occupies residues 407-427 (LFLGGSVLLFMQLVPSELFYL). Over 428–430 (STA) the chain is Extracellular. Residues 431–451 (LVMVGKFGITSAYSMVYVYTA) traverse the membrane as a helical segment. Residues 452–462 (ELYPTVVRNMG) lie on the Cytoplasmic side of the membrane. The helical transmembrane segment at 463-483 (VGVSSTASRLGSILSPYFVYL) threads the bilayer. The Extracellular portion of the chain corresponds to 484-488 (GAYDR). Y486 carries the post-translational modification Phosphotyrosine. The chain crosses the membrane as a helical span at residues 489–509 (FLPYILMGSLTILTAILTLFF). The Cytoplasmic portion of the chain corresponds to 510–557 (PESFGVPLPDTIDQMLRVKGIKQWQIQSQTRMQKDGEESPTVLKSTAF). S548 carries the phosphoserine modification. The residue at position 550 (T550) is a Phosphothreonine.

This sequence belongs to the major facilitator (TC 2.A.1) superfamily. Organic cation transporter (TC 2.A.1.19) family. Interacts with PDZK1. Widely expressed. Expressed in kidney, liver and testis. Expressed at the brush border of the small, large intestine and colon (at protein level).

The protein localises to the apical cell membrane. The protein resides in the basal cell membrane. Its subcellular location is the cell membrane. It carries out the reaction (R)-carnitine(out) + Na(+)(out) = (R)-carnitine(in) + Na(+)(in). It catalyses the reaction glycine betaine(out) + Na(+)(out) = glycine betaine(in) + Na(+)(in). The enzyme catalyses glycine betaine(out) + (R)-carnitine(in) = glycine betaine(in) + (R)-carnitine(out). The catalysed reaction is O-butanoyl-(R)-carnitine(out) + Na(+)(out) = O-butanoyl-(R)-carnitine(in) + Na(+)(in). It carries out the reaction O-acetyl-(R)-carnitine(out) + Na(+)(out) = O-acetyl-(R)-carnitine(in) + Na(+)(in). It catalyses the reaction O-propanoyl-(R)-carnitine(out) + Na(+)(out) = O-propanoyl-(R)-carnitine(in) + Na(+)(in). The enzyme catalyses (S)-carnitine(out) + Na(+)(out) = (S)-carnitine(in) + Na(+)(in). The catalysed reaction is an O-acyl-(R)-carnitine(out) + Na(+)(out) = an O-acyl-(R)-carnitine(in) + Na(+)(in). It carries out the reaction L-glutamyl-L-arginyl-glycyl-L-methionyl-L-threonine(out) + Na(+)(out) = L-glutamyl-L-arginyl-glycyl-L-methionyl-L-threonine(in) + Na(+)(in). It catalyses the reaction N,N-dimethylglycine(out) + Na(+)(out) = N,N-dimethylglycine(in) + Na(+)(in). With respect to regulation, inhibited by emetine, quinidine and verapamil. The IC(50) of emetine is 4.2 uM. Not inhibited by valproic acid. Transport of (R)-carnitine is stimulated by cholesterol in the plasma membrane. In terms of biological role, sodium-ion dependent, high affinity carnitine transporter. Involved in the active cellular uptake of carnitine. Transports one sodium ion with one molecule of carnitine. Also transports organic cations such as tetraethylammonium (TEA) without the involvement of sodium. Also relative uptake activity ratio of carnitine to TEA is 11.3. May also contribute to regulate the transport of organic compounds in testis across the blood-testis-barrier. The protein is Organic cation/carnitine transporter 2 of Mus musculus (Mouse).